A 420-amino-acid chain; its full sequence is MNTSFTRKSHTFLPKLFFRKMSSSGAKEKPELQFPFLQDEDTVATLHECKTLFILRGLPGSGKSTLARLILEKYHDGTKMVSADAYKIIPGSRADFSEAYKRLDEDLAGYCRRDIRVLVLDDTNHERERLDQLFEMADQYQYQVVLVEPKTAWRLDCAQLKEKNQWQLSADDLKKLKPGLEKDFLPLYFGWFLTKKSSETLRKAGQVFLEELGNHKAFKKELRHFISGDEPKEKLELVSYFGKRPPGVLHCTTKFCDYGKAAGAEEYAQQEVVKRSYGKAFKLSISALFVTPKTAGAQVVLTDQELQLWPSDLDKPSASEGLPPGSRAHVTLGCAADVQPVQTGLDLLDILQQVKGGSQGEAVGELPRGKLYSLGKGRWMLSLTKKMEVKAIFTGYYGKGKPVPIHGSRKGGAMQICTII.

At S9 the chain carries Phosphoserine. Y110 is modified (phosphotyrosine). Phosphoserine is present on residues S169, S227, and S239. Residue H250 is the Proton acceptor of the active site. A substrate-binding site is contributed by T252. The Proton donor role is filled by H329. T331 lines the substrate pocket. S358 carries the phosphoserine modification. The residue at position 417 (C417) is a Cysteine methyl ester. C417 carries the S-farnesyl cysteine lipid modification. Residues 418–420 constitute a propeptide, removed in mature form; the sequence is TII.

Belongs to the 2H phosphoesterase superfamily. CNPase family. Exists as monomers and homodimers.

It localises to the membrane. Its subcellular location is the melanosome. The catalysed reaction is a nucleoside 2',3'-cyclic phosphate + H2O = a nucleoside 2'-phosphate + H(+). In terms of biological role, catalyzes the formation of 2'-nucleotide products from 2',3'-cyclic substrates. May participate in RNA metabolism in the myelinating cell, CNP is the third most abundant protein in central nervous system myelin. The polypeptide is 2',3'-cyclic-nucleotide 3'-phosphodiesterase (Mus musculus (Mouse)).